The following is a 100-amino-acid chain: ATP synthase subunit c (100 aa).

A run of 2 helical transmembrane segments spans residues 30–50 and 80–100; these read LLYLGAGLAIGLAGLGAGVGM and AFIETIALYGLLIAFILLFVV.

This sequence belongs to the ATPase C chain family. In terms of assembly, F-type ATPases have 2 components, F(1) - the catalytic core - and F(0) - the membrane proton channel. F(1) has five subunits: alpha(3), beta(3), gamma(1), delta(1), epsilon(1). F(0) has three main subunits: a(1), b(2) and c(10-14). The alpha and beta chains form an alternating ring which encloses part of the gamma chain. F(1) is attached to F(0) by a central stalk formed by the gamma and epsilon chains, while a peripheral stalk is formed by the delta and b chains.

Its subcellular location is the cell inner membrane. Its function is as follows. F(1)F(0) ATP synthase produces ATP from ADP in the presence of a proton or sodium gradient. F-type ATPases consist of two structural domains, F(1) containing the extramembraneous catalytic core and F(0) containing the membrane proton channel, linked together by a central stalk and a peripheral stalk. During catalysis, ATP synthesis in the catalytic domain of F(1) is coupled via a rotary mechanism of the central stalk subunits to proton translocation. In terms of biological role, key component of the F(0) channel; it plays a direct role in translocation across the membrane. A homomeric c-ring of between 10-14 subunits forms the central stalk rotor element with the F(1) delta and epsilon subunits. The chain is ATP synthase subunit c from Aquifex aeolicus (strain VF5).